A 436-amino-acid chain; its full sequence is Serine/threonine-protein kinase STK11 (436 aa).

Serine 31 carries the phosphoserine modification. N6-acetyllysine occurs at positions 44 and 48. The tract at residues 45-90 is sufficient for interaction with SIRT1; that stretch reads LIGKYLMGDLLGEGSYGKVKEVLDSETLCRRAVKILKKKKLRRIPN. A Protein kinase domain is found at 49-309; it reads YLMGDLLGEG…IRQIRQHSWF (261 aa). Residues 55–63 and lysine 78 each bind ATP; that span reads LGEGSYGKV. Lysine 96 and lysine 97 each carry N6-acetyllysine. Aspartate 176 (proton acceptor) is an active-site residue. Residue threonine 189 is modified to Phosphothreonine; by autocatalysis. Residues lysine 296 and lysine 311 each carry the N6-acetyllysine modification. Residue serine 325 is modified to Phosphoserine. Threonine 336 carries the post-translational modification Phosphothreonine; by autocatalysis. The residue at position 366 (threonine 366) is a Phosphothreonine; by ATM and autocatalysis. A disordered region spans residues 398–421; the sequence is TEPQLSSKVKPEGRPGTANPARKV. Phosphoserine is present on serine 403. Lysine 420 is subject to N6-acetyllysine. Residue cysteine 422 is the site of S-palmitoyl cysteine attachment. At lysine 426 the chain carries N6-acetyllysine. A Phosphoserine; by autocatalysis, PKA, PKC/PRKCZ and RPS6KA1 modification is found at serine 431. Position 433 is a cysteine methyl ester (cysteine 433). The S-farnesyl cysteine moiety is linked to residue cysteine 433. Lysine 434 carries the post-translational modification N6-acetyllysine. A propeptide spans 434-436 (removed in mature form); that stretch reads KQQ.

This sequence belongs to the protein kinase superfamily. CAMK Ser/Thr protein kinase family. LKB1 subfamily. As to quaternary structure, catalytic component of a trimeric complex composed of STK11/LKB1, STRAD (STRADA or STRADB) and CAB39/MO25 (CAB39/MO25alpha or CAB39L/MO25beta): the complex tethers STK11/LKB1 in the cytoplasm and stimulates its catalytic activity. Found in a ternary complex composed of SMAD4, STK11/LKB1 and STK11IP. Interacts with p53/TP53, SMAD4, STK11IP and WDR6. Interacts with NR4A1. Interacts with NISCH; this interaction may increase STK11 activity. Interacts with PTEN, leading to PTEN phosphorylation. Interacts with SIRT1; the interaction deacetylates STK11. Interacts with CDKN1A. It depends on Mg(2+) as a cofactor. Requires Mn(2+) as cofactor. Phosphorylated by ATM at Thr-366 following ionizing radiation (IR). Phosphorylation at Ser-431 by RPS6KA1 and/or some PKA is required to inhibit cell growth. Phosphorylation at Ser-431 is also required during neuronal polarization to mediate phosphorylation of BRSK1 and BRSK2. Phosphorylation by PKC/PRKCZ at Ser-399 in isoform 2 promotes metformin (or peroxynitrite)-induced nuclear export of STK11 and activation of AMPK. UV radiation-induced phosphorylation at Thr-366 mediates CDKN1A degradation. In terms of processing, acetylated. Deacetylation at Lys-48 enhances cytoplasmic localization and kinase activity in vitro. As to expression, widely expressed. Predominantly expressed in testis (at protein level). In terms of tissue distribution, expressed in adult brain and liver and absent from tissues derived from postnatal day 7.

The protein localises to the nucleus. It is found in the cytoplasm. Its subcellular location is the membrane. The protein resides in the mitochondrion. The enzyme catalyses L-seryl-[protein] + ATP = O-phospho-L-seryl-[protein] + ADP + H(+). It carries out the reaction L-threonyl-[protein] + ATP = O-phospho-L-threonyl-[protein] + ADP + H(+). Activated by forming a complex with STRAD (STRADA or STRADB) and CAB39/MO25 (CAB39/MO25alpha or CAB39L/MO25beta): STRADA (or STRADB)-binding promotes a conformational change of STK11/LKB1 in an active conformation, which is stabilized by CAB39/MO25alpha (or CAB39L/MO25beta) interacting with the STK11/LKB1 activation loop. Sequestration in the nucleus by NR4A1 prevents it from phosphorylating and activating cytoplasmic AMPK. Functionally, tumor suppressor serine/threonine-protein kinase that controls the activity of AMP-activated protein kinase (AMPK) family members, thereby playing a role in various processes such as cell metabolism, cell polarity, apoptosis and DNA damage response. Acts by phosphorylating the T-loop of AMPK family proteins, thus promoting their activity: phosphorylates PRKAA1, PRKAA2, BRSK1, BRSK2, MARK1, MARK2, MARK3, MARK4, NUAK1, NUAK2, SIK1, SIK2, SIK3 and SNRK but not MELK. Also phosphorylates non-AMPK family proteins such as STRADA, PTEN and possibly p53/TP53. Acts as a key upstream regulator of AMPK by mediating phosphorylation and activation of AMPK catalytic subunits PRKAA1 and PRKAA2 and thereby regulates processes including: inhibition of signaling pathways that promote cell growth and proliferation when energy levels are low, glucose homeostasis in liver, activation of autophagy when cells undergo nutrient deprivation, and B-cell differentiation in the germinal center in response to DNA damage. Also acts as a regulator of cellular polarity by remodeling the actin cytoskeleton. Required for cortical neuron polarization by mediating phosphorylation and activation of BRSK1 and BRSK2, leading to axon initiation and specification. Involved in DNA damage response: interacts with p53/TP53 and recruited to the CDKN1A/WAF1 promoter to participate in transcription activation. Able to phosphorylate p53/TP53; the relevance of such result in vivo is however unclear and phosphorylation may be indirect and mediated by downstream STK11/LKB1 kinase NUAK1. Also acts as a mediator of p53/TP53-dependent apoptosis via interaction with p53/TP53: translocates to the mitochondrion during apoptosis and regulates p53/TP53-dependent apoptosis pathways. Regulates UV radiation-induced DNA damage response mediated by CDKN1A. In association with NUAK1, phosphorylates CDKN1A in response to UV radiation and contributes to its degradation which is necessary for optimal DNA repair. Has a role in spermiogenesis. This Mus musculus (Mouse) protein is Serine/threonine-protein kinase STK11.